The chain runs to 142 residues: Metallothiol transferase FosB (142 aa).

One can recognise a VOC domain in the interval serine 5–glycine 120. Residues histidine 8, histidine 67, and glutamate 116 each coordinate Mg(2+). Residue glutamate 116 is the Proton donor/acceptor of the active site.

Belongs to the fosfomycin resistance protein family. FosB subfamily. As to quaternary structure, homodimer. Requires Mg(2+) as cofactor.

The protein localises to the cytoplasm. Metallothiol transferase which confers resistance to fosfomycin by catalyzing the addition of a thiol cofactor to fosfomycin. L-cysteine is probably the physiological thiol donor. This Staphylococcus epidermidis (strain ATCC 12228 / FDA PCI 1200) protein is Metallothiol transferase FosB.